A 300-amino-acid polypeptide reads, in one-letter code: Ribonuclease HIII (300 aa).

One can recognise an RNase H type-2 domain in the interval 86 to 300 (RSRIGVDESG…FNEVLGSGNQ (215 aa)). The a divalent metal cation site is built by D92, E93, and D196.

It belongs to the RNase HII family. RnhC subfamily. Mn(2+) is required as a cofactor. The cofactor is Mg(2+).

It is found in the cytoplasm. It carries out the reaction Endonucleolytic cleavage to 5'-phosphomonoester.. Functionally, endonuclease that specifically degrades the RNA of RNA-DNA hybrids. The polypeptide is Ribonuclease HIII (Chlamydia trachomatis serovar L2 (strain ATCC VR-902B / DSM 19102 / 434/Bu)).